We begin with the raw amino-acid sequence, 371 residues long: Probable palmitoyltransferase ZDHHC11B (371 aa).

A run of 2 helical transmembrane segments spans residues 43–63 (VVTWAVFVGLSLATFRIFIPL) and 70–90 (YIAYVVTGGIFSFHLVVHLIA). The DHHC domain occupies 125-175 (QFCHLCKVTVNKKTKHCISCNKCVSGFDHHCKWINNCVGSRNYWFFFSTVA). The S-palmitoyl cysteine intermediate role is filled by C155. 3 consecutive transmembrane segments (helical) span residues 177–197 (ATAGMLCLIAILLYVLVQYLV), 216–236 (TWLLFLPLFPVQVQTLIVVII), and 239–259 (LVLLLDLLGLVQLGQLLIFHI). The tract at residues 335 to 371 (DGDSKAQEADDAPSTSTLGLQQETTEPMKTDSAESED) is disordered. Over residues 347-359 (PSTSTLGLQQETT) the composition is skewed to polar residues. Residues 360–371 (EPMKTDSAESED) show a composition bias toward basic and acidic residues.

The protein belongs to the DHHC palmitoyltransferase family.

The protein resides in the membrane. It catalyses the reaction L-cysteinyl-[protein] + hexadecanoyl-CoA = S-hexadecanoyl-L-cysteinyl-[protein] + CoA. Probable palmitoyltransferase that could catalyze the addition of palmitate onto various protein substrates and be involved in a variety of cellular processes. May play a role in cell proliferation. This Homo sapiens (Human) protein is Probable palmitoyltransferase ZDHHC11B.